Here is a 314-residue protein sequence, read N- to C-terminus: Serine protease 46 (314 aa).

The Peptidase S1 domain maps to 44 to 281; sequence VVNGKVVEVG…FTQWIKRQIG (238 aa). A disulfide bridge links C69 with C85. Residues H84 and D130 each act as charge relay system in the active site. Disulfide bonds link C164–C239, C197–C219, and C229–C257. S233 (charge relay system) is an active-site residue. A helical transmembrane segment spans residues 293-313; the sequence is FLSPFILTGYILLVSLGSLWL.

The protein belongs to the peptidase S1 family.

It is found in the membrane. The polypeptide is Serine protease 46 (Prss46) (Rattus norvegicus (Rat)).